Consider the following 343-residue polypeptide: Phospholipid phosphatase-related protein type 2 (343 aa).

3 helical membrane passes run 12-32 (FSII…VILL), 69-89 (VPPA…ILLG), and 129-149 (FLGV…AGQV). An N-linked (GlcNAc...) asparagine glycan is attached at Asn-165. Transmembrane regions (helical) follow at residues 210–230 (AALC…VFRV), 239–259 (SLCL…VAEY), and 266–286 (VLAG…CVVH). The segment at 290-343 (SRPPSGRRLSPWEDLGQAPTMDSPLEKNPRSAGRIRHRHGSPHPSRRTAPAVAT) is disordered. Phosphoserine is present on residues Ser-299 and Ser-312. Positions 322 to 335 (GRIRHRHGSPHPSR) are enriched in basic residues.

The protein belongs to the PA-phosphatase related phosphoesterase family.

The protein resides in the membrane. This is Phospholipid phosphatase-related protein type 2 from Homo sapiens (Human).